Consider the following 259-residue polypeptide: UPF0246 protein PSHAa2558 (259 aa).

Belongs to the UPF0246 family.

The protein is UPF0246 protein PSHAa2558 of Pseudoalteromonas translucida (strain TAC 125).